The following is a 464-amino-acid chain: Purple acid phosphatase (464 aa).

Positions 1-30 (MGVVEGLLALALVLSACVMCNGGSSSPFIR) are cleaved as a signal peptide. N108 and N136 each carry an N-linked (GlcNAc...) asparagine glycan. Residue D162 participates in Fe cation binding. N170 carries an N-linked (GlcNAc...) asparagine glycan. D191 and Y194 together coordinate Fe cation. D191 provides a ligand contact to Zn(2+). Position 228 (N228) interacts with Zn(2+). N228 serves as a coordination point for substrate. N301 carries an N-linked (GlcNAc...) asparagine glycan. H313 contributes to the Zn(2+) binding site. Catalysis depends on H323, which acts as the Proton donor. Residue H350 coordinates Zn(2+). Position 350 to 352 (350 to 352 (HVH)) interacts with substrate. H352 contributes to the Fe cation binding site. N398 and N423 each carry an N-linked (GlcNAc...) asparagine glycan.

The protein belongs to the metallophosphoesterase superfamily. Purple acid phosphatase family. In terms of assembly, homodimer; disulfide-linked. It depends on Fe cation as a cofactor. The cofactor is Zn(2+). Mn(2+) serves as cofactor. Requires Cu(2+) as cofactor. Mg(2+) is required as a cofactor.

Its subcellular location is the secreted. The enzyme catalyses a phosphate monoester + H2O = an alcohol + phosphate. The polypeptide is Purple acid phosphatase (Glycine max (Soybean)).